The chain runs to 294 residues: Ribosomal RNA small subunit methyltransferase A (294 aa).

Residues asparagine 29, valine 31, glycine 56, glutamate 77, aspartate 107, and asparagine 126 each coordinate S-adenosyl-L-methionine.

This sequence belongs to the class I-like SAM-binding methyltransferase superfamily. rRNA adenine N(6)-methyltransferase family. RsmA subfamily.

It localises to the cytoplasm. The catalysed reaction is adenosine(1518)/adenosine(1519) in 16S rRNA + 4 S-adenosyl-L-methionine = N(6)-dimethyladenosine(1518)/N(6)-dimethyladenosine(1519) in 16S rRNA + 4 S-adenosyl-L-homocysteine + 4 H(+). Its function is as follows. Specifically dimethylates two adjacent adenosines (A1518 and A1519) in the loop of a conserved hairpin near the 3'-end of 16S rRNA in the 30S particle. May play a critical role in biogenesis of 30S subunits. The polypeptide is Ribosomal RNA small subunit methyltransferase A (Mycobacterium sp. (strain MCS)).